The following is a 430-amino-acid chain: Enolase (430 aa).

A (2R)-2-phosphoglycerate-binding site is contributed by Q163. The active-site Proton donor is the E205. 3 residues coordinate Mg(2+): D242, E285, and D312. The (2R)-2-phosphoglycerate site is built by K337, R366, S367, and K388. The active-site Proton acceptor is K337.

It belongs to the enolase family. Requires Mg(2+) as cofactor.

It localises to the cytoplasm. The protein localises to the secreted. It is found in the cell surface. The catalysed reaction is (2R)-2-phosphoglycerate = phosphoenolpyruvate + H2O. It participates in carbohydrate degradation; glycolysis; pyruvate from D-glyceraldehyde 3-phosphate: step 4/5. Functionally, catalyzes the reversible conversion of 2-phosphoglycerate (2-PG) into phosphoenolpyruvate (PEP). It is essential for the degradation of carbohydrates via glycolysis. In Maridesulfovibrio salexigens (strain ATCC 14822 / DSM 2638 / NCIMB 8403 / VKM B-1763) (Desulfovibrio salexigens), this protein is Enolase.